The primary structure comprises 331 residues: Glycerol-3-phosphate dehydrogenase [NAD(P)+] (331 aa).

NADPH-binding residues include Trp13, Arg33, and Lys103. Residues Lys103, Gly131, and Thr133 each contribute to the sn-glycerol 3-phosphate site. Ala135 lines the NADPH pocket. 5 residues coordinate sn-glycerol 3-phosphate: Lys187, Asp240, Ser250, Arg251, and Asn252. Lys187 acts as the Proton acceptor in catalysis. Arg251 serves as a coordination point for NADPH. Residues Val275 and Glu277 each contribute to the NADPH site.

It belongs to the NAD-dependent glycerol-3-phosphate dehydrogenase family.

It localises to the cytoplasm. It catalyses the reaction sn-glycerol 3-phosphate + NAD(+) = dihydroxyacetone phosphate + NADH + H(+). It carries out the reaction sn-glycerol 3-phosphate + NADP(+) = dihydroxyacetone phosphate + NADPH + H(+). It participates in membrane lipid metabolism; glycerophospholipid metabolism. Its function is as follows. Catalyzes the reduction of the glycolytic intermediate dihydroxyacetone phosphate (DHAP) to sn-glycerol 3-phosphate (G3P), the key precursor for phospholipid synthesis. The chain is Glycerol-3-phosphate dehydrogenase [NAD(P)+] from Novosphingobium aromaticivorans (strain ATCC 700278 / DSM 12444 / CCUG 56034 / CIP 105152 / NBRC 16084 / F199).